The primary structure comprises 184 residues: Coordinator of PRMT5 and differentiation stimulator (184 aa).

The residue at position 1 (Met-1) is an N-acetylmethionine. A compositionally biased stretch (low complexity) spans 1–14 (MDLQAAGAQAQGAA). The interval 1-136 (MDLQAAGAQA…PYDADDIQES (136 aa)) is disordered. Residues 42 to 56 (SSQERETEKAMDRLA) are compositionally biased toward basic and acidic residues. Phosphoserine occurs at positions 66 and 75. The span at 78–89 (EGFAMDEEDSDG) shows a compositional bias: acidic residues.

Interacts with PRMT5. Interacts with histone H4; specifically interacts with the N-terminus of histone H4 but not with histone H3. Interacts with CBFB. Found in a complex with PRMT5, RUNX1 and CBFB.

It is found in the nucleus. Functionally, histone-binding protein required for histone H4 methyltransferase activity of PRMT5. Specifically required for histone H4 'Arg-3' methylation mediated by PRMT5, but not histone H3 'Arg-8' methylation, suggesting that it modulates the substrate specificity of PRMT5. Specifically interacts with the N-terminus of histone H4 but not with histone H3, suggesting that it acts by promoting the association between histone H4 and PRMT5. Involved in CCNE1 promoter repression. Plays a role in muscle cell differentiation by modulating the recruitment of PRMT5 to the promoter of genes involved in the coordination between cell cycle exit and muscle differentiation. The polypeptide is Coordinator of PRMT5 and differentiation stimulator (COPRS) (Homo sapiens (Human)).